The primary structure comprises 82 residues: Small ribosomal subunit protein bS16 (82 aa).

Belongs to the bacterial ribosomal protein bS16 family.

This chain is Small ribosomal subunit protein bS16, found in Caldanaerobacter subterraneus subsp. tengcongensis (strain DSM 15242 / JCM 11007 / NBRC 100824 / MB4) (Thermoanaerobacter tengcongensis).